An 87-amino-acid chain; its full sequence is Small ribosomal subunit protein uS17 (87 aa).

It belongs to the universal ribosomal protein uS17 family. In terms of assembly, part of the 30S ribosomal subunit.

Functionally, one of the primary rRNA binding proteins, it binds specifically to the 5'-end of 16S ribosomal RNA. This Bacillus cytotoxicus (strain DSM 22905 / CIP 110041 / 391-98 / NVH 391-98) protein is Small ribosomal subunit protein uS17.